Consider the following 339-residue polypeptide: Uroporphyrinogen decarboxylase (339 aa).

Residues 21–25 (RQAGR), D71, Y147, S202, and H315 each bind substrate.

This sequence belongs to the uroporphyrinogen decarboxylase family. Homodimer.

The protein resides in the cytoplasm. The catalysed reaction is uroporphyrinogen III + 4 H(+) = coproporphyrinogen III + 4 CO2. It functions in the pathway porphyrin-containing compound metabolism; protoporphyrin-IX biosynthesis; coproporphyrinogen-III from 5-aminolevulinate: step 4/4. Its function is as follows. Catalyzes the decarboxylation of four acetate groups of uroporphyrinogen-III to yield coproporphyrinogen-III. The protein is Uroporphyrinogen decarboxylase of Helicobacter acinonychis (strain Sheeba).